We begin with the raw amino-acid sequence, 336 residues long: Tryptophan--tRNA ligase (336 aa).

ATP is bound by residues 13-15 (QPS) and 21-22 (GN). A 'HIGH' region motif is present at residues 14–22 (PSGNLTIGN). Position 140 (Asp-140) interacts with L-tryptophan. ATP contacts are provided by residues 152–154 (GQD), Ile-191, and 200–204 (KMSKS). Positions 200–204 (KMSKS) match the 'KMSKS' region motif.

This sequence belongs to the class-I aminoacyl-tRNA synthetase family. In terms of assembly, homodimer.

It is found in the cytoplasm. The catalysed reaction is tRNA(Trp) + L-tryptophan + ATP = L-tryptophyl-tRNA(Trp) + AMP + diphosphate + H(+). In terms of biological role, catalyzes the attachment of tryptophan to tRNA(Trp). This is Tryptophan--tRNA ligase from Buchnera aphidicola subsp. Schizaphis graminum (strain Sg).